Here is a 78-residue protein sequence, read N- to C-terminus: UPF0270 protein ECA4061 (78 aa).

It belongs to the UPF0270 family.

The protein is UPF0270 protein ECA4061 of Pectobacterium atrosepticum (strain SCRI 1043 / ATCC BAA-672) (Erwinia carotovora subsp. atroseptica).